We begin with the raw amino-acid sequence, 503 residues long: Beta-amylase Tri a 17 (503 aa).

The substrate site is built by Asp51, His91, and Asp99. Residue Glu184 is the Proton donor of the active site. Substrate-binding residues include Lys293, His298, and Thr340. Residue Glu378 is the Proton acceptor of the active site. Residues 379 to 380 (NA) and Arg418 contribute to the substrate site.

Belongs to the glycosyl hydrolase 14 family.

The enzyme catalyses Hydrolysis of (1-&gt;4)-alpha-D-glucosidic linkages in polysaccharides so as to remove successive maltose units from the non-reducing ends of the chains.. The polypeptide is Beta-amylase Tri a 17 (BMY1) (Triticum aestivum (Wheat)).